The primary structure comprises 332 residues: MKTLGEFIVEKQHEFSQATGELTALLSAIKLGAKIIHRDINKAGLVDILGASGAENVQGEVQQKLDLFANEKLKAALKARDIVAGIASEEEDEIVVFEGCEHAKYVVLMDPLDGSSNIDVNVSVGTIFSIYRRVTPVGTPVTEEDFLQPGNKQVAAGYVVYGSSTMLVYTTGCGVHAFTYDPSLGVFCLCQERMRFPEKGKTYSINEGNYIKFPNGVKKYIKFCQEEDSSTSRPYTSRYIGSLVADFHRNLLKGGIYLYPSTASHPQGKLRLLYECNPMAFLAEQAGGKASDGKERILDIIPESLHQRRSFFVGNRHMVEDVERFIREYPDA.

4 residues coordinate Mg(2+): glutamate 89, aspartate 110, leucine 112, and aspartate 113. Residues 113–116 (DGSS), asparagine 206, tyrosine 239, 257–259 (YLY), and lysine 269 contribute to the substrate site. Residue glutamate 275 participates in Mg(2+) binding.

This sequence belongs to the FBPase class 1 family. In terms of assembly, homotetramer. It depends on Mg(2+) as a cofactor.

It localises to the cytoplasm. The catalysed reaction is beta-D-fructose 1,6-bisphosphate + H2O = beta-D-fructose 6-phosphate + phosphate. It functions in the pathway carbohydrate biosynthesis; gluconeogenesis. This Salmonella arizonae (strain ATCC BAA-731 / CDC346-86 / RSK2980) protein is Fructose-1,6-bisphosphatase class 1.